A 721-amino-acid polypeptide reads, in one-letter code: Polyribonucleotide nucleotidyltransferase (721 aa).

The Mg(2+) site is built by aspartate 495 and aspartate 501. Positions 562–621 constitute a KH domain; it reads PRLLSFRIDPELIGTVIGPGGRTIKGITERTNTKIDIEDSGIVTIASHDGAAAEEAQKII. One can recognise an S1 motif domain in the interval 631–699; the sequence is GEMFSGSITR…NRGRINLTLR (69 aa). Residues 700–721 are disordered; that stretch reads GVPQSGESTEVEPQPTPVAPLS.

This sequence belongs to the polyribonucleotide nucleotidyltransferase family. The cofactor is Mg(2+).

The protein resides in the cytoplasm. It carries out the reaction RNA(n+1) + phosphate = RNA(n) + a ribonucleoside 5'-diphosphate. Involved in mRNA degradation. Catalyzes the phosphorolysis of single-stranded polyribonucleotides processively in the 3'- to 5'-direction. In Synechococcus sp. (strain CC9902), this protein is Polyribonucleotide nucleotidyltransferase.